Reading from the N-terminus, the 394-residue chain is Chaperone protein DnaJ (394 aa).

The J domain occupies 4 to 68 (DYYEILGVSR…ELKARYDRFG (65 aa)). The CR-type zinc-finger motif lies at 136–218 (GGEKQIRISH…CNGEGLAQTT (83 aa)). Zn(2+)-binding residues include cysteine 149, cysteine 152, cysteine 166, cysteine 169, cysteine 192, cysteine 195, cysteine 206, and cysteine 209. CXXCXGXG motif repeat units follow at residues 149–156 (CNVCGGSG), 166–173 (CPTCGGSG), 192–199 (CPTCGGSG), and 206–213 (CYNCNGEG).

The protein belongs to the DnaJ family. In terms of assembly, homodimer. Zn(2+) is required as a cofactor.

The protein localises to the cytoplasm. Its function is as follows. Participates actively in the response to hyperosmotic and heat shock by preventing the aggregation of stress-denatured proteins and by disaggregating proteins, also in an autonomous, DnaK-independent fashion. Unfolded proteins bind initially to DnaJ; upon interaction with the DnaJ-bound protein, DnaK hydrolyzes its bound ATP, resulting in the formation of a stable complex. GrpE releases ADP from DnaK; ATP binding to DnaK triggers the release of the substrate protein, thus completing the reaction cycle. Several rounds of ATP-dependent interactions between DnaJ, DnaK and GrpE are required for fully efficient folding. Also involved, together with DnaK and GrpE, in the DNA replication of plasmids through activation of initiation proteins. The protein is Chaperone protein DnaJ of Synechococcus sp. (strain JA-2-3B'a(2-13)) (Cyanobacteria bacterium Yellowstone B-Prime).